We begin with the raw amino-acid sequence, 524 residues long: Putative UDP-glucuronosyltransferase ugt-56 (524 aa).

Positions 1 to 20 (MLWAFIVWLGALCIYGSAFD) are cleaved as a signal peptide. N-linked (GlcNAc...) asparagine glycosylation is found at asparagine 125, asparagine 277, and asparagine 335. A helical transmembrane segment spans residues 488–508 (LIDSSIALVFMLFIFVFVNHF).

Belongs to the UDP-glycosyltransferase family.

It localises to the membrane. The enzyme catalyses glucuronate acceptor + UDP-alpha-D-glucuronate = acceptor beta-D-glucuronoside + UDP + H(+). The polypeptide is Putative UDP-glucuronosyltransferase ugt-56 (ugt-56) (Caenorhabditis elegans).